A 150-amino-acid polypeptide reads, in one-letter code: Small ribosomal subunit protein uS13 (150 aa).

It belongs to the universal ribosomal protein uS13 family. In terms of assembly, part of the 30S ribosomal subunit. Forms a loose heterodimer with protein S19. Forms two bridges to the 50S subunit in the 70S ribosome.

Functionally, located at the top of the head of the 30S subunit, it contacts several helices of the 16S rRNA. In the 70S ribosome it contacts the 23S rRNA (bridge B1a) and protein L5 of the 50S subunit (bridge B1b), connecting the 2 subunits; these bridges are implicated in subunit movement. The polypeptide is Small ribosomal subunit protein uS13 (Aeropyrum pernix (strain ATCC 700893 / DSM 11879 / JCM 9820 / NBRC 100138 / K1)).